The chain runs to 322 residues: Probable 2-oxoglutarate-dependent dioxygenase AOP1 (322 aa).

The 107-residue stretch at 165–271 (TYYLTRLMKY…RYSTGLFSIP (107 aa)) folds into the Fe2OG dioxygenase domain. His-195, Asp-197, and His-252 together coordinate Fe cation. Arg-262 contacts 2-oxoglutarate.

This sequence belongs to the iron/ascorbate-dependent oxidoreductase family. Fe(2+) is required as a cofactor.

Functionally, probable 2-oxoglutarate-dependent dioxygenase that may be involved in glucosinolates biosynthesis. May play a role in the production of aliphatic glucosinolates. The sequence is that of Probable 2-oxoglutarate-dependent dioxygenase AOP1 (AOP1) from Arabidopsis thaliana (Mouse-ear cress).